We begin with the raw amino-acid sequence, 41 residues long: uncharacterized protein (41 aa).

This is an uncharacterized protein from Rickettsia prowazekii (strain Madrid E).